The sequence spans 234 residues: CKLF-like MARVEL transmembrane domain-containing protein 4 (234 aa).

The segment covering Met1–Glu11 has biased composition (acidic residues). The tract at residues Met1–Arg38 is disordered. The segment covering Ser15 to Ser25 has biased composition (low complexity). In terms of domain architecture, MARVEL spans Tyr49–Arg176. Transmembrane regions (helical) follow at residues Val59–Ser79, Tyr85–Phe105, Leu123–Leu143, and Ile151–Ala171. Ser194 is subject to Phosphoserine.

The protein belongs to the chemokine-like factor family. As to quaternary structure, interacts with PD-L1/CD274 and CMTM6. Highly expressed in testis and prostate.

The protein localises to the membrane. In terms of biological role, acts as a backup for CMTM6 to regulate plasma membrane expression of PD-L1/CD274, an immune inhibitory ligand critical for immune tolerance to self and antitumor immunity. May protect PD-L1/CD274 from being polyubiquitinated and targeted for degradation. In Homo sapiens (Human), this protein is CKLF-like MARVEL transmembrane domain-containing protein 4.